The sequence spans 438 residues: GTPase Obg (438 aa).

Residues 2-160 (SMFLDQVTID…RKIELELKVL (159 aa)) form the Obg domain. A disordered region spans residues 128 to 147 (NIRFASPRNPAPEIAENGEP). Residues 161–339 (ADVGLVGFPS…LLNATADLLE (179 aa)) form the OBG-type G domain. GTP-binding positions include 167 to 174 (GFPSVGKS), 192 to 196 (FTTLV), 214 to 217 (DLPG), 284 to 287 (NKMD), and 320 to 322 (SGV). Mg(2+)-binding residues include serine 174 and threonine 194. The 79-residue stretch at 360-438 (GFQPEGPEFT…IGNFEFEFVE (79 aa)) folds into the OCT domain.

Belongs to the TRAFAC class OBG-HflX-like GTPase superfamily. OBG GTPase family. Monomer. Mg(2+) is required as a cofactor.

Its subcellular location is the cytoplasm. Functionally, an essential GTPase which binds GTP, GDP and possibly (p)ppGpp with moderate affinity, with high nucleotide exchange rates and a fairly low GTP hydrolysis rate. Plays a role in control of the cell cycle, stress response, ribosome biogenesis and in those bacteria that undergo differentiation, in morphogenesis control. The sequence is that of GTPase Obg from Enterococcus faecalis (strain ATCC 700802 / V583).